Consider the following 317-residue polypeptide: Ornithine carbamoyltransferase (317 aa).

Residues 57 to 60 (STRT), Q84, R108, and 135 to 138 (HPCQ) each bind carbamoyl phosphate. Residues N166, D230, and 234 to 235 (SM) each bind L-ornithine. Residues 270–271 (CL) and R298 contribute to the carbamoyl phosphate site.

The protein belongs to the aspartate/ornithine carbamoyltransferase superfamily. OTCase family. As to quaternary structure, homododecamer.

It localises to the cytoplasm. It carries out the reaction carbamoyl phosphate + L-ornithine = L-citrulline + phosphate + H(+). The protein operates within amino-acid biosynthesis; L-arginine biosynthesis; L-arginine from L-ornithine and carbamoyl phosphate: step 1/3. In terms of biological role, reversibly catalyzes the transfer of the carbamoyl group from carbamoyl phosphate (CP) to the N(epsilon) atom of ornithine (ORN) to produce L-citrulline. This Pyrococcus horikoshii (strain ATCC 700860 / DSM 12428 / JCM 9974 / NBRC 100139 / OT-3) protein is Ornithine carbamoyltransferase.